We begin with the raw amino-acid sequence, 151 residues long: Brain ribonuclease (151 aa).

Positions 1 to 25 (KESAAAKFRRQHMDAGSSSSGNSNY) are disordered. Substrate contacts are provided by lysine 7 and arginine 10. Histidine 12 serves as the catalytic Proton acceptor. 4 disulfides stabilise this stretch: cysteine 26/cysteine 84, cysteine 40/cysteine 95, cysteine 58/cysteine 110, and cysteine 65/cysteine 72. Residue 41–45 (KPVNT) coordinates substrate. N-linked (GlcNAc...) asparagine glycosylation is present at asparagine 62. Residues lysine 66 and arginine 85 each contribute to the substrate site. The active-site Proton donor is histidine 119. Threonine 129 is a glycosylation site (O-linked (GalNAc...) threonine). O-linked (GalNAc...) serine glycosylation is present at serine 133.

It belongs to the pancreatic ribonuclease family.

It is found in the secreted. The polypeptide is Brain ribonuclease (BRN) (Axis porcinus (Hog deer)).